A 305-amino-acid chain; its full sequence is Protoheme IX farnesyltransferase (305 aa).

Transmembrane regions (helical) follow at residues 28 to 48 (IIELLLITTVPVMFLAEQGVP), 52 to 72 (LVLLTCLGGYLSAGGANALNM), 101 to 121 (LAFGITLAVVSTLLFGLTVNW), 122 to 142 (LSAWLSLGALLFYVVVYTMIL), 149 to 169 (NIVWGGIAGCLPVLIGWSSVT), 174 to 194 (WAPVILFLVMFFWTPPHYWPL), 218 to 238 (VVARQIVIYSWVMVGVSLLLT), 240 to 260 (LGYTGWFYTLVALLAGGFWLW), and 283 to 303 (LFHWSITYVSILFVAVAVDPF).

Belongs to the UbiA prenyltransferase family. Protoheme IX farnesyltransferase subfamily.

Its subcellular location is the cell membrane. It carries out the reaction heme b + (2E,6E)-farnesyl diphosphate + H2O = Fe(II)-heme o + diphosphate. The protein operates within porphyrin-containing compound metabolism; heme O biosynthesis; heme O from protoheme: step 1/1. In terms of biological role, converts heme B (protoheme IX) to heme O by substitution of the vinyl group on carbon 2 of heme B porphyrin ring with a hydroxyethyl farnesyl side group. In Streptomyces avermitilis (strain ATCC 31267 / DSM 46492 / JCM 5070 / NBRC 14893 / NCIMB 12804 / NRRL 8165 / MA-4680), this protein is Protoheme IX farnesyltransferase.